A 487-amino-acid chain; its full sequence is Beta-barrel assembly-enhancing protease (487 aa).

Positions 1-27 (MFRQLKKNLVATLIAALALGQVAPAFA) are cleaved as a signal peptide. His136 provides a ligand contact to Zn(2+). Glu137 is an active-site residue. Positions 140 and 201 each coordinate Zn(2+). The active-site Proton donor is the Asp205. TPR repeat units follow at residues 309 to 342 (HAAQYGRALQAMEASKYDEARKTLQPLLSAEPNN) and 427 to 460 (DQELAARAESYALAGRLDQAISLLSSASAQAKLG).

It belongs to the peptidase M48 family. BepA subfamily. Requires Zn(2+) as cofactor.

It is found in the periplasm. Functions both as a chaperone and a metalloprotease. Maintains the integrity of the outer membrane by promoting either the assembly or the elimination of outer membrane proteins, depending on their folding state. This chain is Beta-barrel assembly-enhancing protease, found in Salmonella typhi.